Reading from the N-terminus, the 361-residue chain is Histidinol-phosphate aminotransferase (361 aa).

The residue at position 216 (Lys216) is an N6-(pyridoxal phosphate)lysine.

The protein belongs to the class-II pyridoxal-phosphate-dependent aminotransferase family. Histidinol-phosphate aminotransferase subfamily. As to quaternary structure, homodimer. Requires pyridoxal 5'-phosphate as cofactor.

It carries out the reaction L-histidinol phosphate + 2-oxoglutarate = 3-(imidazol-4-yl)-2-oxopropyl phosphate + L-glutamate. It participates in amino-acid biosynthesis; L-histidine biosynthesis; L-histidine from 5-phospho-alpha-D-ribose 1-diphosphate: step 7/9. This chain is Histidinol-phosphate aminotransferase, found in Francisella philomiragia subsp. philomiragia (strain ATCC 25017 / CCUG 19701 / FSC 153 / O#319-036).